A 326-amino-acid polypeptide reads, in one-letter code: Flavanone 3-dioxygenase 3 (326 aa).

The span at 1 to 15 shows a compositional bias: polar residues; that stretch reads MSDTSKGIPQEQLPS. The disordered stretch occupies residues 1-21; that stretch reads MSDTSKGIPQEQLPSQELHPP. A Fe2OG dioxygenase domain is found at 175 to 276; that stretch reads EGLQLLSVNC…RISLASIHGF (102 aa). Fe cation-binding residues include His-200, Asp-202, and His-257. Arg-267 serves as a coordination point for 2-oxoglutarate.

It belongs to the iron/ascorbate-dependent oxidoreductase family. It depends on Fe(2+) as a cofactor. The cofactor is L-ascorbate. Expressed at very low levels in roots, leaves, stems and seeds.

The catalysed reaction is a (2S)-flavan-4-one + 2-oxoglutarate + O2 = a (2R,3R)-dihydroflavonol + succinate + CO2. Its pathway is secondary metabolite biosynthesis; flavonoid biosynthesis. Functionally, catalyzes the 3-beta-hydroxylation of 2S-flavanones to 2R,3R-dihydroflavonols which are intermediates in the biosynthesis of flavonols, anthocyanidins, catechins and proanthocyanidins in plants. Converts (2S)-eriodictyol to (+)-taxifolin and (2S)-naringenin to (+)-(2R/3R)-dihydrokaempferol in vitro. The chain is Flavanone 3-dioxygenase 3 from Oryza sativa subsp. japonica (Rice).